The primary structure comprises 262 residues: Indole-3-glycerol phosphate synthase (262 aa).

The protein belongs to the TrpC family.

It catalyses the reaction 1-(2-carboxyphenylamino)-1-deoxy-D-ribulose 5-phosphate + H(+) = (1S,2R)-1-C-(indol-3-yl)glycerol 3-phosphate + CO2 + H2O. The protein operates within amino-acid biosynthesis; L-tryptophan biosynthesis; L-tryptophan from chorismate: step 4/5. The protein is Indole-3-glycerol phosphate synthase of Bordetella petrii (strain ATCC BAA-461 / DSM 12804 / CCUG 43448).